The chain runs to 335 residues: Ubiquinone biosynthesis protein COQ4, mitochondrial (335 aa).

The transit peptide at 1–10 (MLRLSLLRST) directs the protein to the mitochondrion. Zn(2+)-binding residues include H210, D211, H214, and E226.

It belongs to the COQ4 family. As to quaternary structure, component of a multi-subunit COQ enzyme complex, composed of at least COQ3, COQ4, COQ5, COQ6, COQ7 and COQ9. Interacts with COQ3. Zn(2+) is required as a cofactor.

The protein resides in the mitochondrion inner membrane. It catalyses the reaction 4-hydroxy-3-methoxy-5-(all-trans-hexaprenyl)benzoate + H(+) = 2-methoxy-6-(all-trans-hexaprenyl)phenol + CO2. It functions in the pathway cofactor biosynthesis; ubiquinone biosynthesis. Its function is as follows. Lyase that catalyzes the C1-decarboxylation of 4-hydroxy-3-methoxy-5-(all-trans-hexaprenyl)benzoic acid into 2-methoxy-6-(all-trans-hexaprenyl)phenol during ubiquinone biosynthesis. In Saccharomyces cerevisiae (strain YJM789) (Baker's yeast), this protein is Ubiquinone biosynthesis protein COQ4, mitochondrial.